The sequence spans 595 residues: Glutamyl-tRNA(Gln) amidotransferase subunit B, mitochondrial (595 aa).

The transit peptide at 1–114 (MPRLWYSRYL…RAPTSTVAEP (114 aa)) directs the protein to the mitochondrion. Residues 59-78 (KEEAKRSKSQSRNGRGKKQV) form a disordered region.

Belongs to the GatB/GatE family. GatB subfamily. In terms of assembly, subunit of the heterotrimeric GatCAB amidotransferase (AdT) complex, composed of A, B and C subunits.

Its subcellular location is the mitochondrion. The enzyme catalyses L-glutamyl-tRNA(Gln) + L-glutamine + ATP + H2O = L-glutaminyl-tRNA(Gln) + L-glutamate + ADP + phosphate + H(+). Its function is as follows. Allows the formation of correctly charged Gln-tRNA(Gln) through the transamidation of misacylated Glu-tRNA(Gln) in the mitochondria. The reaction takes place in the presence of glutamine and ATP through an activated gamma-phospho-Glu-tRNA(Gln). The chain is Glutamyl-tRNA(Gln) amidotransferase subunit B, mitochondrial from Talaromyces stipitatus (strain ATCC 10500 / CBS 375.48 / QM 6759 / NRRL 1006) (Penicillium stipitatum).